An 86-amino-acid polypeptide reads, in one-letter code: Large ribosomal subunit protein uL23 (86 aa).

This sequence belongs to the universal ribosomal protein uL23 family. Part of the 50S ribosomal subunit. Contacts protein L29.

In terms of biological role, binds to 23S rRNA. One of the proteins that surrounds the polypeptide exit tunnel on the outside of the ribosome. The sequence is that of Large ribosomal subunit protein uL23 from Caldivirga maquilingensis (strain ATCC 700844 / DSM 13496 / JCM 10307 / IC-167).